The chain runs to 93 residues: Large ribosomal subunit protein uL23cz/uL23cy (93 aa).

Belongs to the universal ribosomal protein uL23 family. Part of the 50S ribosomal subunit.

The protein localises to the plastid. The protein resides in the chloroplast. Its function is as follows. Binds to 23S rRNA. The chain is Large ribosomal subunit protein uL23cz/uL23cy (rpl23-A) from Populus alba (White poplar).